We begin with the raw amino-acid sequence, 116 residues long: Ribosome-binding factor A (116 aa).

The protein belongs to the RbfA family. In terms of assembly, monomer. Binds 30S ribosomal subunits, but not 50S ribosomal subunits or 70S ribosomes.

The protein resides in the cytoplasm. In terms of biological role, one of several proteins that assist in the late maturation steps of the functional core of the 30S ribosomal subunit. Associates with free 30S ribosomal subunits (but not with 30S subunits that are part of 70S ribosomes or polysomes). Required for efficient processing of 16S rRNA. May interact with the 5'-terminal helix region of 16S rRNA. In Clostridium botulinum (strain Alaska E43 / Type E3), this protein is Ribosome-binding factor A.